We begin with the raw amino-acid sequence, 226 residues long: Uracil phosphoribosyltransferase (226 aa).

Position 36–40 (36–40 (KGLVK)) interacts with GTP. 5-phospho-alpha-D-ribose 1-diphosphate contacts are provided by residues Arg-86, Arg-111, and 145–153 (DPMLATGST). Uracil is bound by residues Ile-211 and 216–218 (GDA). Residue Asp-217 participates in 5-phospho-alpha-D-ribose 1-diphosphate binding.

Belongs to the UPRTase family. Mg(2+) serves as cofactor.

It carries out the reaction UMP + diphosphate = 5-phospho-alpha-D-ribose 1-diphosphate + uracil. It functions in the pathway pyrimidine metabolism; UMP biosynthesis via salvage pathway; UMP from uracil: step 1/1. With respect to regulation, allosterically activated by GTP. Functionally, catalyzes the conversion of uracil and 5-phospho-alpha-D-ribose 1-diphosphate (PRPP) to UMP and diphosphate. This is Uracil phosphoribosyltransferase from Haloquadratum walsbyi (strain DSM 16790 / HBSQ001).